The following is a 299-amino-acid chain: CCR4-NOT transcription complex subunit 9 (299 aa).

An N-acetylmethionine modification is found at Met1.

The protein belongs to the CNOT9 family. In terms of assembly, homodimer. Component of the CCR4-NOT complex; distinct complexes seem to exist that differ in the participation of probably mutually exclusive catalytic subunits. Interacts with MYB, ATF2, RARA, RARB, RARG, RXRA, RXRB and RXRG. Identified in a complex with ATF2 bound to target DNA. Interacts with NANOS2. Directly interacts with ZNF335. In terms of tissue distribution, detected in spleen, thymus, prostate, testis, ovary and intestine.

The protein resides in the nucleus. It is found in the cytoplasm. The protein localises to the P-body. In terms of biological role, component of the CCR4-NOT complex which is one of the major cellular mRNA deadenylases and is linked to various cellular processes including bulk mRNA degradation, miRNA-mediated repression, translational repression during translational initiation and general transcription regulation. Additional complex functions may be a consequence of its influence on mRNA expression. Involved in down-regulation of MYB- and JUN-dependent transcription. May play a role in cell differentiation. Can bind oligonucleotides, such as poly-G, poly-C or poly-T (in vitro), but the physiological relevance of this is not certain. Does not bind poly-A. Enhances ligand-dependent transcriptional activity of nuclear hormone receptors, including RARA, expect ESR1-mediated transcription that is not only slightly increased, if at all. This is CCR4-NOT transcription complex subunit 9 from Homo sapiens (Human).